The primary structure comprises 655 residues: p-hydroxybenzoic acid efflux pump subunit AaeB (655 aa).

11 helical membrane passes run 13-33 (FAVK…HFQL), 38-58 (WAVL…GGEP), 69-89 (LRII…ISMI), 93-113 (LLMI…SSLV), 121-141 (WGLS…EPLL), 152-172 (EIVI…PRSI), 370-390 (LFWL…IAVV), 407-427 (FIYG…VIIP), 431-451 (QSML…GIEV), 459-479 (MGAL…TFHF), and 482-502 (FLDS…VILL).

It belongs to the aromatic acid exporter ArAE (TC 2.A.85) family.

Its subcellular location is the cell inner membrane. Functionally, forms an efflux pump with AaeA. Could function as a metabolic relief valve, allowing to eliminate certain compounds when they accumulate to high levels in the cell. This chain is p-hydroxybenzoic acid efflux pump subunit AaeB, found in Salmonella enteritidis PT4 (strain P125109).